Here is an 87-residue protein sequence, read N- to C-terminus: Defensin-like protein 223 (87 aa).

An N-terminal signal peptide occupies residues 1–34 (MKSTIFVLTLLIFVSLYFNIIVYVSFSFIGTSEI). Cystine bridges form between Cys55–Cys72, Cys58–Cys77, and Cys62–Cys79.

It belongs to the DEFL family.

The protein localises to the secreted. This is Defensin-like protein 223 from Arabidopsis thaliana (Mouse-ear cress).